A 209-amino-acid chain; its full sequence is MKIQSIFAASFCLLSSISAHAAIQLTVPDEVELILVDNQEVKLESSFFSTTSTLDLENGKHQIVFRYNPVFKQGKDNIIVSSDIIVSTFSAEDKEISFKFPTYNSPEKAKAFNRDLNWELIDKNNNSIPFAQSQLIYNGMQVGRNIQFEVAKFNTTEHPAAFKEGMLTVTHKEIKNEQGENTAEQMLHYWYEKADQATKERFLKSITNK.

The first 21 residues, 1 to 21, serve as a signal peptide directing secretion; the sequence is MKIQSIFAASFCLLSSISAHA.

Belongs to the UPF0319 family.

In Aliivibrio fischeri (strain MJ11) (Vibrio fischeri), this protein is UPF0319 protein VFMJ11_1730.